The primary structure comprises 274 residues: Large ribosomal subunit protein uL2 (274 aa).

Disordered stretches follow at residues 28-59 (APYA…GGHK) and 222-274 (GAAM…RRTK). A compositionally biased stretch (polar residues) spans 39 to 49 (KSGGRNNNGRI). Basic and acidic residues predominate over residues 229-239 (DHPHGGGEGRS).

This sequence belongs to the universal ribosomal protein uL2 family. Part of the 50S ribosomal subunit. Forms a bridge to the 30S subunit in the 70S ribosome.

In terms of biological role, one of the primary rRNA binding proteins. Required for association of the 30S and 50S subunits to form the 70S ribosome, for tRNA binding and peptide bond formation. It has been suggested to have peptidyltransferase activity; this is somewhat controversial. Makes several contacts with the 16S rRNA in the 70S ribosome. The chain is Large ribosomal subunit protein uL2 from Marinomonas sp. (strain MWYL1).